We begin with the raw amino-acid sequence, 1325 residues long: MAEPESEPNATFELELFLPGRPLLPKDVKSLGLPETPPSLKVAVTQHETLNDLRITLNDSPEGYWLGAFRFRRPDSHTRKGELVNEWEELQEVFRHDAPHDRILQVSHEPYNETEVRLHIQRLRDLLSGTQSDPASVSVDAGATVHDAIVHANEWAHDAHMPAPPKPSWRGWPQDGTAQLLPALARYPRVLPKCVRGMALSAWNPPPKSWALRGHLLYLSIDTLEGDVLHITASVNGFFLNASSSQKFQPQPHPSKALHSSSLFDLLCAASPLFLQNFALLFNDPVSTRDYFSALPVMNSLPAAPWLAREPKHESDPMRTQTAFLLTGAMSADTLDGSRDWNEELQSSRELPRSSLAERLMRDRVLNRLYAEFTLAAARVVPRVAAGEVAPMNPADAPAAHMYLYNNLFVTRGTDSVDMYRFLGGDAAAHVAVGKDLQGVRRLGNLDIEGLSLLGTVVIDWLGERWVVQTVLPGLFRQVAADAAASQSDGSTASHVAYGGVEGPDTIHTDPAFHKVLSVAGKSLHVAEHKMRDAQGMEHELCLSVDCKGLRGTDGRMYLLDVSRHTPMDVTWLDHDMEGSVLEGTDTASYPHRLPLLRPELIDAYWDMHLHEFARDKLARQRASNEASSPSTATSSQVDVSDFSLNFHPDAFAEFRTGSGDDARVIQPATDESIPSIAAVRKVSEYLRKEVIVRLISDVAAGLTSAVDGIALTNRMHARGINMRYLGYIANLSQPSQRDHWDQSVVSKLGSGHEALVQAFRRVVIHEMVVRSAKHCLRTYLRALPLMEAAACIAHFANCFLGTEREPSPVPKMPEVIPASTASRSESHKPWMSLTPAKLVEELRIDIRKRFRFELPMFFLETELRKPQALRALCLKMGIQLAVRDYEFEPEAKHAEGQAAAPSSNATKEKTTTSSRSGLSKKGKRAFPPPPSKPLRTTTFVPEDVVCVCPLVKTSTPKSSLSEDAFEAGRISFVRGEREIGTELMLESIGFYEQVYGLVHPETGKCYSKFASFLHHYAAEFAIKAARKASADSNQGSSSDGDRIGTNDAGSADGSKTEHDDQLPEVVKEVFTLENALRFQRQAVTVSERTLGLDHPETMTQYMNLAMMEQSSANLDDALRYQERVMQLWQLLYGRDHPDVVHTLSSIALMLQMRQDYEPSLRAYEASHDLAVRLFGPNSIYTGNMAHELSQALILSGDLKAAIQVEKEAWRIFQERLGSEDPLTKESQALLSGLAATAVRAAKQQHARELVQTRMPSSARSTRSSAHHHHHRHLHQQQQNSSSSPHPIPALANRSIDDLVEYIQGTPGTGSSRAARKRAARAKRS.

One can recognise a Clu domain in the interval 311–573 (PKHESDPMRT…RHTPMDVTWL (263 aa)). Disordered stretches follow at residues 893–937 (KHAE…PLRT), 1032–1063 (DSNQ…DDQL), and 1245–1325 (QHAR…AKRS). Residues 1265–1275 (SAHHHHHRHLH) are compositionally biased toward basic residues. Residues 1276–1285 (QQQQNSSSSP) are compositionally biased toward low complexity. The segment covering 1314–1325 (AARKRAARAKRS) has biased composition (basic residues).

Belongs to the CLU family. As to quaternary structure, may associate with the eukaryotic translation initiation factor 3 (eIF-3) complex.

It localises to the cytoplasm. MRNA-binding protein involved in proper cytoplasmic distribution of mitochondria. This chain is Clustered mitochondria protein homolog, found in Malassezia globosa (strain ATCC MYA-4612 / CBS 7966) (Dandruff-associated fungus).